A 484-amino-acid polypeptide reads, in one-letter code: Aldehyde dehydrogenase family 3 member F1 (484 aa).

192 to 197 (GSPKIG) contacts NAD(+). Glu-214 (proton acceptor) is an active-site residue. Cys-252 serves as the catalytic Nucleophile.

Belongs to the aldehyde dehydrogenase family. As to quaternary structure, homotetramer. Constituively expressed at low levels.

The catalysed reaction is an aldehyde + NAD(+) + H2O = a carboxylate + NADH + 2 H(+). The polypeptide is Aldehyde dehydrogenase family 3 member F1 (ALDH3F1) (Arabidopsis thaliana (Mouse-ear cress)).